We begin with the raw amino-acid sequence, 513 residues long: ATP synthase subunit alpha (513 aa).

169–176 (GDRQTGKT) serves as a coordination point for ATP.

It belongs to the ATPase alpha/beta chains family. In terms of assembly, F-type ATPases have 2 components, CF(1) - the catalytic core - and CF(0) - the membrane proton channel. CF(1) has five subunits: alpha(3), beta(3), gamma(1), delta(1), epsilon(1). CF(0) has three main subunits: a(1), b(2) and c(9-12). The alpha and beta chains form an alternating ring which encloses part of the gamma chain. CF(1) is attached to CF(0) by a central stalk formed by the gamma and epsilon chains, while a peripheral stalk is formed by the delta and b chains.

The protein localises to the cell inner membrane. The enzyme catalyses ATP + H2O + 4 H(+)(in) = ADP + phosphate + 5 H(+)(out). Functionally, produces ATP from ADP in the presence of a proton gradient across the membrane. The alpha chain is a regulatory subunit. In Actinobacillus pleuropneumoniae serotype 3 (strain JL03), this protein is ATP synthase subunit alpha.